A 473-amino-acid polypeptide reads, in one-letter code: H(+)/Cl(-) exchange transporter ClcA (473 aa).

At 1 to 32 (MKTDTPSLETPQAARLRRRQLIRQLLERDKTP) the chain is on the cytoplasmic side. Residues 33-69 (LAILFMAAVVGTLVGLAAVAFDKGVAWLQNQRMGALV) traverse the membrane as a helical segment. The Periplasmic portion of the chain corresponds to 70 to 76 (HTADNYP). A helical transmembrane segment spans residues 77–100 (LLLTVAFLCSAVLAMFGYFLVRKY). Residues 106 to 110 (GSGIP) carry the Selectivity filter part_1 motif. Residue S107 participates in chloride binding. Positions 109 to 116 (IPEIEGAL) form an intramembrane region, helical. Topologically, residues 117–123 (EDQRPVR) are cytoplasmic. A run of 2 helical transmembrane segments spans residues 124-141 (WWRVLPVKFFGGLGTLGG) and 148-166 (EGPTVQIGGNIGRMVLDIF). The short motif at 146-150 (GREGP) is the Selectivity filter part_2 element. Residues 167–176 (RLKGDEARHT) lie on the Cytoplasmic side of the membrane. 2 consecutive intramembrane regions (helical) follow at residues 177-189 (LLATGAAAGLAAA) and 193-201 (PLAGILFII). Topologically, residues 202–214 (EEMRPQFRYTLIS) are cytoplasmic. The helical transmembrane segment at 215–232 (IKAVFIGVIMSTIMYRIF) threads the bilayer. The Periplasmic portion of the chain corresponds to 233-252 (NHEVALIDVGKLSDAPLNTQ). Residues 253 to 281 (WLYLILGIIFGIFGPIFNKWVLGMQDLLH) form a helical membrane-spanning segment. The Cytoplasmic segment spans residues 282 to 287 (RVHGGN). The chain crosses the membrane as a helical span at residues 288-309 (ITKWVLMGGAIGGLCGLLGFVA). Topologically, residues 310-329 (PATSGGGFNLIPIATAGNFS) are periplasmic. 2 helical membrane-spanning segments follow: residues 330 to 349 (MGMLVFIFVARVITTLLCFS) and 355 to 376 (GIFAPMLALGTVLGTAFGMVVV). The short motif at 355–359 (GIFAP) is the Selectivity filter part_3 element. The chloride site is built by I356 and F357. Residues 377–386 (ELFPQYHLEA) are Periplasmic-facing. Residues 387–401 (GTFAIAGMGALLAAS) constitute an intramembrane region (helical). An intramembrane region (note=Loop between two helices) is located at residues 402-404 (IRA). Positions 405–416 (PLTGIILVLEMT) form an intramembrane region, helical. Positions 417–421 (DNYQL) form an intramembrane region, note=Loop between two helices. A helical transmembrane segment spans residues 422-438 (ILPMIITGLGATLLAQF). The Cytoplasmic segment spans residues 439-473 (TGGKPLYSAILARTLAKQEAEQLARSKAASASENT). A chloride-binding site is contributed by Y445.

It belongs to the chloride channel (TC 2.A.49) family. ClcA subfamily. In terms of assembly, homodimer.

Its subcellular location is the cell inner membrane. The catalysed reaction is 2 chloride(in) + H(+)(out) = 2 chloride(out) + H(+)(in). Functionally, proton-coupled chloride transporter. Functions as antiport system and exchanges two chloride ions for 1 proton. Probably acts as an electrical shunt for an outwardly-directed proton pump that is linked to amino acid decarboxylation, as part of the extreme acid resistance (XAR) response. This chain is H(+)/Cl(-) exchange transporter ClcA, found in Shigella boydii serotype 18 (strain CDC 3083-94 / BS512).